The following is a 158-amino-acid chain: uncharacterized protein (158 aa).

This is an uncharacterized protein from Bacillus subtilis (Bacteriophage phi-105).